Reading from the N-terminus, the 1224-residue chain is DNA-directed RNA polymerase subunit beta (1224 aa).

It belongs to the RNA polymerase beta chain family. As to quaternary structure, the RNAP catalytic core consists of 2 alpha, 1 beta, 1 beta' and 1 omega subunit. When a sigma factor is associated with the core the holoenzyme is formed, which can initiate transcription.

It catalyses the reaction RNA(n) + a ribonucleoside 5'-triphosphate = RNA(n+1) + diphosphate. Its function is as follows. DNA-dependent RNA polymerase catalyzes the transcription of DNA into RNA using the four ribonucleoside triphosphates as substrates. The protein is DNA-directed RNA polymerase subunit beta of Pelotomaculum thermopropionicum (strain DSM 13744 / JCM 10971 / SI).